The following is a 194-amino-acid chain: NAD(P)H-quinone oxidoreductase subunit I (194 aa).

4Fe-4S ferredoxin-type domains follow at residues 55–84 (GRIH…VDWE) and 95–124 (NHYS…MTEE). [4Fe-4S] cluster contacts are provided by Cys-64, Cys-67, Cys-70, Cys-74, Cys-104, Cys-107, Cys-110, and Cys-114. The segment at 173 to 194 (DLPANAPRPGARPEDLVEKTEA) is disordered. The span at 183-194 (ARPEDLVEKTEA) shows a compositional bias: basic and acidic residues.

It belongs to the complex I 23 kDa subunit family. NDH-1 is composed of at least 11 different subunits. The cofactor is [4Fe-4S] cluster.

The protein resides in the cellular thylakoid membrane. The enzyme catalyses a plastoquinone + NADH + (n+1) H(+)(in) = a plastoquinol + NAD(+) + n H(+)(out). It catalyses the reaction a plastoquinone + NADPH + (n+1) H(+)(in) = a plastoquinol + NADP(+) + n H(+)(out). Functionally, NDH-1 shuttles electrons from an unknown electron donor, via FMN and iron-sulfur (Fe-S) centers, to quinones in the respiratory and/or the photosynthetic chain. The immediate electron acceptor for the enzyme in this species is believed to be plastoquinone. Couples the redox reaction to proton translocation, and thus conserves the redox energy in a proton gradient. The chain is NAD(P)H-quinone oxidoreductase subunit I from Nostoc sp. (strain PCC 7120 / SAG 25.82 / UTEX 2576).